A 144-amino-acid polypeptide reads, in one-letter code: Deoxyuridine 5'-triphosphate nucleotidohydrolase (144 aa).

Residues 63–65, asparagine 76, 80–82, and lysine 90 contribute to the substrate site; these read RSG and TID.

This sequence belongs to the dUTPase family. Mg(2+) serves as cofactor.

It carries out the reaction dUTP + H2O = dUMP + diphosphate + H(+). It participates in pyrimidine metabolism; dUMP biosynthesis; dUMP from dCTP (dUTP route): step 2/2. Its function is as follows. This enzyme is involved in nucleotide metabolism: it produces dUMP, the immediate precursor of thymidine nucleotides and it decreases the intracellular concentration of dUTP so that uracil cannot be incorporated into DNA. In Hydrogenobaculum sp. (strain Y04AAS1), this protein is Deoxyuridine 5'-triphosphate nucleotidohydrolase.